Consider the following 229-residue polypeptide: Platelet-activating factor acetylhydrolase IB subunit alpha2 (229 aa).

Active-site residues include Ser-48, Asp-193, and His-196.

Belongs to the 'GDSL' lipolytic enzyme family. Platelet-activating factor acetylhydrolase IB beta/gamma subunits subfamily. In terms of assembly, forms a catalytic dimer which is either homodimer (alpha2/alpha2 homodimer) or heterodimer with PAFAH1B3 (alpha2/alpha1 heterodimer). Component of the cytosolic (PAF-AH (I)) heterotetrameric enzyme, which is composed of PAFAH1B1 (beta), PAFAH1B2 (alpha2) and PAFAH1B3 (alpha1) subunits. The catalytic activity of the enzyme resides in the alpha1 (PAFAH1B3) and alpha2 (PAFAH1B2) subunits, whereas the beta subunit (PAFAH1B1) has regulatory activity. Trimer formation is not essential for the catalytic activity.

The protein resides in the cytoplasm. The enzyme catalyses a 1-O-alkyl-2-acetyl-sn-glycero-3-phosphocholine + H2O = a 1-O-alkyl-sn-glycero-3-phosphocholine + acetate + H(+). It carries out the reaction 1-O-hexadecyl-2-acetyl-sn-glycero-3-phosphocholine + H2O = 1-O-hexadecyl-sn-glycero-3-phosphocholine + acetate + H(+). The catalysed reaction is 1-O-hexadecyl-2-acetyl-sn-glycero-3-phosphate + H2O = 1-O-hexadecyl-sn-glycero-3-phosphate + acetate + H(+). It catalyses the reaction 1-O-hexadecyl-2-acetyl-sn-glycero-3-phosphoethanolamine + H2O = 1-O-hexadecyl-sn-glycero-3-phosphoethanolamine + acetate + H(+). Functionally, alpha2 catalytic subunit of the cytosolic type I platelet-activating factor (PAF) acetylhydrolase (PAF-AH (I)) heterotetrameric enzyme that catalyzes the hydrolyze of the acetyl group at the sn-2 position of PAF and its analogs and modulates the action of PAF. The sequence is that of Platelet-activating factor acetylhydrolase IB subunit alpha2 (PAFAH1B2) from Gallus gallus (Chicken).